A 371-amino-acid chain; its full sequence is Protein RecA (371 aa).

75 to 82 is an ATP binding site; the sequence is GPESSGKT. The interval 343 to 371 is disordered; sequence KAKDEPIADEDQPIDVVPNFDDQDVEPQN.

This sequence belongs to the RecA family.

The protein localises to the cytoplasm. In terms of biological role, can catalyze the hydrolysis of ATP in the presence of single-stranded DNA, the ATP-dependent uptake of single-stranded DNA by duplex DNA, and the ATP-dependent hybridization of homologous single-stranded DNAs. It interacts with LexA causing its activation and leading to its autocatalytic cleavage. The chain is Protein RecA from Corynebacterium urealyticum (strain ATCC 43042 / DSM 7109).